Consider the following 132-residue polypeptide: Seminal vesicle protein SVP-2 (132 aa).

The signal sequence occupies residues 1–14; it reads HLALLLILENQASG. Over residues 33 to 81 the composition is skewed to basic and acidic residues; sequence HKEEVEESESSRGQDFDKRRFWEKDDPTGEHVSVRHEHLEKSHIRFKED. Disordered regions lie at residues 33–104 and 113–132; these read HKEE…LKRH and VEDQALANGADPGKSNMQRV. Residues 104–132 constitute a propeptide that is removed on maturation; it reads HDAMEELVSVEDQALANGADPGKSNMQRV.

The protein to the SVP-1/-3/-4 precursor, particularly in regions where protein processing must occur.

Its subcellular location is the secreted. The protein is Seminal vesicle protein SVP-2 of Cavia porcellus (Guinea pig).